Here is a 298-residue protein sequence, read N- to C-terminus: Porphobilinogen deaminase (298 aa).

The residue at position 239 (Cys-239) is an S-(dipyrrolylmethanemethyl)cysteine.

It belongs to the HMBS family. Monomer. Dipyrromethane is required as a cofactor.

It carries out the reaction 4 porphobilinogen + H2O = hydroxymethylbilane + 4 NH4(+). Its pathway is porphyrin-containing compound metabolism; protoporphyrin-IX biosynthesis; coproporphyrinogen-III from 5-aminolevulinate: step 2/4. In terms of biological role, tetrapolymerization of the monopyrrole PBG into the hydroxymethylbilane pre-uroporphyrinogen in several discrete steps. This chain is Porphobilinogen deaminase, found in Orientia tsutsugamushi (strain Boryong) (Rickettsia tsutsugamushi).